The following is a 172-amino-acid chain: Light-harvesting complex-like protein OHP2, chloroplastic (172 aa).

Residues 1–43 (MSVASPIQCIRILNPSSSSSSSTASSSFRFSTTTKPCVFIIRC) constitute a chloroplast transit peptide. At 44 to 135 (SQTEGPLRRP…QPKNEISNGR (92 aa)) the chain is on the stromal side. Positions 45–90 (QTEGPLRRPSAPPTLREPQKPVPPSQPSSSPPPSPPPQKAVAVDGK) are disordered. The segment covering 64 to 82 (KPVPPSQPSSSPPPSPPPQ) has biased composition (pro residues). A helical transmembrane segment spans residues 136-156 (WAMFGFAVGMLTEYATGSDLV). The Lumenal portion of the chain corresponds to 157–172 (DQVKILLSNFGILDLE).

Belongs to the ELIP/psbS family. As to quaternary structure, component of a high molecular weight complex containing OHP1, OHP2 and HCF244, and PSII core proteins D1/D2, HCF136 and HCF173. Forms a trimeric complex with OHP1 and HCF244 that mutually stabilizes each subunit.

The protein localises to the plastid. It is found in the chloroplast thylakoid membrane. May play a photoprotective role within PSI in response to light stress. Forms a trimeric complex with OHP1 and HCF244 that is required to promote PSII core subunit assembly. The trimeric complex forms a transient PSII reaction center-like complex with PsbA, PsbD, PsbE, PsbF and PsbI subunits in thylakoids for early assembly of PSII as well as PSII repair. The trimeric complex is required for the recruitment of ribosomes to the psbA mRNA during PSII biogenesis and repair. Forms a heterodimer with OHP1 that binds chlorophylls and carotenoids, and that may function in the delivery of pigments to the PsbA subunit of PSII. The sequence is that of Light-harvesting complex-like protein OHP2, chloroplastic from Arabidopsis thaliana (Mouse-ear cress).